We begin with the raw amino-acid sequence, 210 residues long: Proteasome subunit beta (210 aa).

A propeptide spans 1-9 (MIHDKVFKG) (removed in mature form; by autocatalysis). Threonine 10 (nucleophile) is an active-site residue.

It belongs to the peptidase T1B family. In terms of assembly, the 20S proteasome core is composed of 14 alpha and 14 beta subunits that assemble into four stacked heptameric rings, resulting in a barrel-shaped structure. The two inner rings, each composed of seven catalytic beta subunits, are sandwiched by two outer rings, each composed of seven alpha subunits. The catalytic chamber with the active sites is on the inside of the barrel. Has a gated structure, the ends of the cylinder being occluded by the N-termini of the alpha-subunits. Is capped at one or both ends by the proteasome regulatory ATPase, PAN.

The protein resides in the cytoplasm. The catalysed reaction is Cleavage of peptide bonds with very broad specificity.. The formation of the proteasomal ATPase PAN-20S proteasome complex, via the docking of the C-termini of PAN into the intersubunit pockets in the alpha-rings, triggers opening of the gate for substrate entry. Interconversion between the open-gate and close-gate conformations leads to a dynamic regulation of the 20S proteasome proteolysis activity. In terms of biological role, component of the proteasome core, a large protease complex with broad specificity involved in protein degradation. The chain is Proteasome subunit beta from Ferroglobus placidus (strain DSM 10642 / AEDII12DO).